Here is a 194-residue protein sequence, read N- to C-terminus: dITP/XTP pyrophosphatase (194 aa).

8 to 13 (TSNPGK) provides a ligand contact to substrate. Glu-38 and Asp-67 together coordinate Mg(2+). Asp-67 acts as the Proton acceptor in catalysis. Substrate-binding positions include Ser-68, 152–155 (FGYD), Lys-175, and 180–181 (HR).

The protein belongs to the HAM1 NTPase family. Homodimer. Mg(2+) serves as cofactor.

It carries out the reaction XTP + H2O = XMP + diphosphate + H(+). The catalysed reaction is dITP + H2O = dIMP + diphosphate + H(+). It catalyses the reaction ITP + H2O = IMP + diphosphate + H(+). Pyrophosphatase that catalyzes the hydrolysis of nucleoside triphosphates to their monophosphate derivatives, with a high preference for the non-canonical purine nucleotides XTP (xanthosine triphosphate), dITP (deoxyinosine triphosphate) and ITP. Seems to function as a house-cleaning enzyme that removes non-canonical purine nucleotides from the nucleotide pool, thus preventing their incorporation into DNA/RNA and avoiding chromosomal lesions. The protein is dITP/XTP pyrophosphatase of Legionella pneumophila (strain Lens).